The primary structure comprises 426 residues: Glutamate-1-semialdehyde 2,1-aminomutase (426 aa).

N6-(pyridoxal phosphate)lysine is present on lysine 265.

This sequence belongs to the class-III pyridoxal-phosphate-dependent aminotransferase family. HemL subfamily. Homodimer. Requires pyridoxal 5'-phosphate as cofactor.

Its subcellular location is the cytoplasm. It catalyses the reaction (S)-4-amino-5-oxopentanoate = 5-aminolevulinate. Its pathway is porphyrin-containing compound metabolism; protoporphyrin-IX biosynthesis; 5-aminolevulinate from L-glutamyl-tRNA(Glu): step 2/2. This is Glutamate-1-semialdehyde 2,1-aminomutase from Salmonella paratyphi A (strain ATCC 9150 / SARB42).